The sequence spans 228 residues: Prolactin (228 aa).

The N-terminal stretch at 1–29 (MCPKGSSVKGSLLLLLLMSSRFLFKAVES) is a signal peptide. An intrachain disulfide couples C33 to C40. Phosphoserine is present on residues S55, S63, and S119. Intrachain disulfides connect C87–C203 and C220–C228.

Belongs to the somatotropin/prolactin family. Interacts with PRLR.

The protein resides in the secreted. Its function is as follows. Prolactin acts primarily on the mammary gland by promoting lactation. This is Prolactin (PRL) from Monodelphis domestica (Gray short-tailed opossum).